A 320-amino-acid polypeptide reads, in one-letter code: o-succinylbenzoate synthase (320 aa).

Lysine 133 (proton donor) is an active-site residue. Residues aspartate 161, glutamate 190, and aspartate 213 each contribute to the Mg(2+) site. Lysine 235 (proton acceptor) is an active-site residue.

Belongs to the mandelate racemase/muconate lactonizing enzyme family. MenC type 1 subfamily. It depends on a divalent metal cation as a cofactor.

It carries out the reaction (1R,6R)-6-hydroxy-2-succinyl-cyclohexa-2,4-diene-1-carboxylate = 2-succinylbenzoate + H2O. The protein operates within quinol/quinone metabolism; 1,4-dihydroxy-2-naphthoate biosynthesis; 1,4-dihydroxy-2-naphthoate from chorismate: step 4/7. It functions in the pathway quinol/quinone metabolism; menaquinone biosynthesis. In terms of biological role, converts 2-succinyl-6-hydroxy-2,4-cyclohexadiene-1-carboxylate (SHCHC) to 2-succinylbenzoate (OSB). The sequence is that of o-succinylbenzoate synthase from Salmonella dublin (strain CT_02021853).